A 245-amino-acid chain; its full sequence is Transcriptional regulatory protein YpdB (245 aa).

Positions 2–116 (KVIIVEDEFL…RITGMLQKLE (115 aa)) constitute a Response regulatory domain. 4-aspartylphosphate is present on Asp-53. Positions 140–245 (INLVKDERII…VKEFRQLMHL (106 aa)) constitute an HTH LytTR-type domain.

In terms of processing, phosphorylated by YpdA.

Its subcellular location is the cytoplasm. Member of the two-component regulatory system YpdA/YpdB. YpdB regulates expression of yhjX by binding to its promoter region. The chain is Transcriptional regulatory protein YpdB (ypdB) from Escherichia coli O6:H1 (strain CFT073 / ATCC 700928 / UPEC).